The following is a 577-amino-acid chain: Arginine--tRNA ligase (577 aa).

A 'HIGH' region motif is present at residues 122–132 (PNVAKEMHVGH).

It belongs to the class-I aminoacyl-tRNA synthetase family. In terms of assembly, monomer.

It is found in the cytoplasm. The catalysed reaction is tRNA(Arg) + L-arginine + ATP = L-arginyl-tRNA(Arg) + AMP + diphosphate. This chain is Arginine--tRNA ligase, found in Escherichia coli O6:K15:H31 (strain 536 / UPEC).